The following is a 101-amino-acid chain: uncharacterized protein (101 aa).

Residues 68 to 90 (LAFAFCGRANTFISCFISFASLI) form a helical membrane-spanning segment.

The protein localises to the membrane. This is an uncharacterized protein from Saccharomyces cerevisiae (strain ATCC 204508 / S288c) (Baker's yeast).